We begin with the raw amino-acid sequence, 433 residues long: Serine--tRNA ligase (433 aa).

Residue 235–237 (TSE) coordinates L-serine. Position 266-268 (266-268 (RSE)) interacts with ATP. Residue Glu-289 coordinates L-serine. Position 353 to 356 (353 to 356 (EISS)) interacts with ATP. Residue Ser-388 participates in L-serine binding.

Belongs to the class-II aminoacyl-tRNA synthetase family. Type-1 seryl-tRNA synthetase subfamily. Homodimer. The tRNA molecule binds across the dimer.

The protein resides in the cytoplasm. The enzyme catalyses tRNA(Ser) + L-serine + ATP = L-seryl-tRNA(Ser) + AMP + diphosphate + H(+). It catalyses the reaction tRNA(Sec) + L-serine + ATP = L-seryl-tRNA(Sec) + AMP + diphosphate + H(+). It functions in the pathway aminoacyl-tRNA biosynthesis; selenocysteinyl-tRNA(Sec) biosynthesis; L-seryl-tRNA(Sec) from L-serine and tRNA(Sec): step 1/1. Catalyzes the attachment of serine to tRNA(Ser). Is also able to aminoacylate tRNA(Sec) with serine, to form the misacylated tRNA L-seryl-tRNA(Sec), which will be further converted into selenocysteinyl-tRNA(Sec). In Burkholderia orbicola (strain MC0-3), this protein is Serine--tRNA ligase.